Here is a 185-residue protein sequence, read N- to C-terminus: ATP-dependent protease subunit HslV (185 aa).

T12 is an active-site residue. A168, C171, and T174 together coordinate Na(+).

Belongs to the peptidase T1B family. HslV subfamily. In terms of assembly, a double ring-shaped homohexamer of HslV is capped on each side by a ring-shaped HslU homohexamer. The assembly of the HslU/HslV complex is dependent on binding of ATP.

The protein localises to the cytoplasm. It carries out the reaction ATP-dependent cleavage of peptide bonds with broad specificity.. Its activity is regulated as follows. Allosterically activated by HslU binding. Functionally, protease subunit of a proteasome-like degradation complex believed to be a general protein degrading machinery. The sequence is that of ATP-dependent protease subunit HslV from Cereibacter sphaeroides (strain KD131 / KCTC 12085) (Rhodobacter sphaeroides).